Consider the following 144-residue polypeptide: Ribosome-binding factor A (144 aa).

2 disordered regions span residues 1–22 (MPRH…QLRV) and 125–144 (TPAV…EEEQ). Positions 134 to 144 (QDPDSDREEEQ) are enriched in acidic residues.

This sequence belongs to the RbfA family. Monomer. Binds 30S ribosomal subunits, but not 50S ribosomal subunits or 70S ribosomes.

It is found in the cytoplasm. In terms of biological role, one of several proteins that assist in the late maturation steps of the functional core of the 30S ribosomal subunit. Associates with free 30S ribosomal subunits (but not with 30S subunits that are part of 70S ribosomes or polysomes). Required for efficient processing of 16S rRNA. May interact with the 5'-terminal helix region of 16S rRNA. This chain is Ribosome-binding factor A, found in Bradyrhizobium diazoefficiens (strain JCM 10833 / BCRC 13528 / IAM 13628 / NBRC 14792 / USDA 110).